Consider the following 286-residue polypeptide: General stress protein 39 (286 aa).

A disordered region spans residues 1–26 (MANYPKELPAQTQSRQPGIESEMNPS). An NAD(+)-binding site is contributed by 46–70 (LITGGDSGIGRAVSVAYAKEGADIA). Substrate is bound at residue Ser-178. Residue Tyr-191 is the Proton acceptor of the active site.

The protein belongs to the short-chain dehydrogenases/reductases (SDR) family.

The protein is General stress protein 39 (ydaD) of Bacillus subtilis (strain 168).